Consider the following 265-residue polypeptide: 5'-nucleotidase SurE (265 aa).

Residues aspartate 8, aspartate 9, serine 39, and asparagine 96 each contribute to the a divalent metal cation site.

It belongs to the SurE nucleotidase family. A divalent metal cation is required as a cofactor.

It is found in the cytoplasm. It carries out the reaction a ribonucleoside 5'-phosphate + H2O = a ribonucleoside + phosphate. Its function is as follows. Nucleotidase that shows phosphatase activity on nucleoside 5'-monophosphates. This Dehalococcoides mccartyi (strain ATCC BAA-2100 / JCM 16839 / KCTC 5957 / BAV1) protein is 5'-nucleotidase SurE.